The following is a 465-amino-acid chain: Ribulose bisphosphate carboxylase large chain (465 aa).

K4 bears the N6,N6,N6-trimethyllysine mark. Substrate contacts are provided by N113 and T163. Residue K165 is the Proton acceptor of the active site. Position 167 (K167) interacts with substrate. K191, D193, and E194 together coordinate Mg(2+). The residue at position 191 (K191) is an N6-carboxylysine. The Proton acceptor role is filled by H284. Substrate-binding residues include R285, H317, and S369.

The protein belongs to the RuBisCO large chain family. Type I subfamily. In terms of assembly, heterohexadecamer of 8 large chains and 8 small chains; disulfide-linked. The disulfide link is formed within the large subunit homodimers. Mg(2+) is required as a cofactor. In terms of processing, the disulfide bond which can form in the large chain dimeric partners within the hexadecamer appears to be associated with oxidative stress and protein turnover.

The protein resides in the plastid. It localises to the chloroplast. The enzyme catalyses 2 (2R)-3-phosphoglycerate + 2 H(+) = D-ribulose 1,5-bisphosphate + CO2 + H2O. The catalysed reaction is D-ribulose 1,5-bisphosphate + O2 = 2-phosphoglycolate + (2R)-3-phosphoglycerate + 2 H(+). Its function is as follows. RuBisCO catalyzes two reactions: the carboxylation of D-ribulose 1,5-bisphosphate, the primary event in carbon dioxide fixation, as well as the oxidative fragmentation of the pentose substrate in the photorespiration process. Both reactions occur simultaneously and in competition at the same active site. This is Ribulose bisphosphate carboxylase large chain from Securidaca diversifolia (Easter flower).